The chain runs to 422 residues: Serine protease HTRA2, mitochondrial (422 aa).

A mitochondrion-targeting transit peptide spans 1–17 (MALRGSHRLQVILKRCI). The propeptide occupies 18-74 (ASPLFHSHAPNRRSSQPAIKGGEPNSNGNSGHDQQNGERKGKGWRRLVSFFVPFSLG). The interval 24–56 (SHAPNRRSSQPAIKGGEPNSNGNSGHDQQNGER) is disordered. A compositionally biased stretch (polar residues) spans 41–51 (PNSNGNSGHDQ). The chain crosses the membrane as a helical span at residues 64 to 82 (LVSFFVPFSLGAVVSAAVI). Short sequence motifs (IAP-binding) lie at residues 75-78 (AVVS) and 94-97 (SKMT). A serine protease region spans residues 139-302 (SNGSGFIIEQ…IPIDYVKVFL (164 aa)). Catalysis depends on charge relay system residues His-157, Asp-189, and Ser-266. The 86-residue stretch at 325-410 (MGITMLTLTP…NLDIVILRGV (86 aa)) folds into the PDZ domain.

Belongs to the peptidase S1C family. As to quaternary structure, interacts with th/DIAP1 (via BIR 2 domain).

Its subcellular location is the mitochondrion intermembrane space. The protein resides in the mitochondrion membrane. It carries out the reaction Cleavage of non-polar aliphatic amino-acids at the P1 position, with a preference for Val, Ile and Met. At the P2 and P3 positions, Arg is selected most strongly with a secondary preference for other hydrophilic residues.. Serine protease that shows proteolytic activity against a non-specific substrate beta-casein. Promotes or induces cell death either by direct binding to and inhibition of BIRC proteins (also called inhibitor of apoptosis proteins, IAPs), leading to an increase in caspase activity, or by a BIRC inhibition-independent, caspase-independent and serine protease activity-dependent mechanism. Can antagonize antiapoptotic activity of th/Diap1 by directly inducing the degradation of th/Diap1. This is Serine protease HTRA2, mitochondrial from Drosophila erecta (Fruit fly).